The chain runs to 259 residues: Archaerhodopsin-2 (259 aa).

Positions 1-6 (MDPIAL) are excised as a propeptide. Residue Gln-7 is modified to Pyrrolidone carboxylic acid. The Extracellular portion of the chain corresponds to 7-18 (QAGFDLLNDGRP). The chain crosses the membrane as a helical span at residues 19–40 (ETLWLGIGTLLMLIGTFYFIAR). Residues 41–49 (GWGVTDKEA) are Cytoplasmic-facing. The chain crosses the membrane as a helical span at residues 50–71 (REYYAITILVPGIASAAYLAMF). At 72–90 (FGIGVTEVELASGTVLDIY) the chain is on the extracellular side. The chain crosses the membrane as a helical span at residues 91–112 (YARYADWLFTTPLLLLDLALLA). The Cytoplasmic segment spans residues 113–115 (KVD). A helical membrane pass occupies residues 116-138 (RVTIGTLIGVDALMIVTGLIGAL). Residues 139-142 (SKTP) are Extracellular-facing. A helical transmembrane segment spans residues 143–171 (LARYTWWLFSTIAFLFVLYYLLTSLRSAA). The Cytoplasmic portion of the chain corresponds to 172 to 174 (AKR). Residues 175–203 (SEEVRSTFNTLTALVAVLWTAYPILWIVG) traverse the membrane as a helical segment. The Extracellular segment spans residues 204-211 (TEGAGVVG). Residues 212–244 (LGIETLAFMVLDVTAKVGFGFVLLRSRAILGET) traverse the membrane as a helical segment. Residue Lys-227 is modified to N6-(retinylidene)lysine. Residues 245–259 (EAPEPSAGADASAAD) lie on the Cytoplasmic side of the membrane.

Belongs to the archaeal/bacterial/fungal opsin family.

Its subcellular location is the cell membrane. Its function is as follows. Light-driven proton pump. It may interact with bacterioruberin in the claret membrane. This chain is Archaerhodopsin-2, found in Halobacterium sp. (strain aus-2).